Consider the following 333-residue polypeptide: Uroporphyrinogen decarboxylase (333 aa).

Residues arginine 21 to arginine 25, aspartate 70, tyrosine 139, serine 194, and histidine 309 each bind substrate.

It belongs to the uroporphyrinogen decarboxylase family. As to quaternary structure, homodimer.

It is found in the cytoplasm. The catalysed reaction is uroporphyrinogen III + 4 H(+) = coproporphyrinogen III + 4 CO2. Its pathway is porphyrin-containing compound metabolism; protoporphyrin-IX biosynthesis; coproporphyrinogen-III from 5-aminolevulinate: step 4/4. In terms of biological role, catalyzes the decarboxylation of four acetate groups of uroporphyrinogen-III to yield coproporphyrinogen-III. The polypeptide is Uroporphyrinogen decarboxylase (Chlamydia abortus (strain DSM 27085 / S26/3) (Chlamydophila abortus)).